The primary structure comprises 491 residues: Ligand-gated ion channel 50 (491 aa).

An N-terminal signal peptide occupies residues 1 to 19; it reads MRFLLVLQLVFFYFSAATT. Asparagine 55 and asparagine 101 each carry an N-linked (GlcNAc...) asparagine glycan. Cysteine 157 and cysteine 171 are disulfide-bonded. Helical transmembrane passes span 241–261, 265–287, and 302–322; these read LFQSYFPTSLTVISSWVGFFF, SVSARITLGVSSLLALTFQFGNV, and VWMIFSVIFIFCTLVELAIVC. Asparagine 418 carries N-linked (GlcNAc...) asparagine glycosylation. A helical membrane pass occupies residues 465-485; sequence MIMFPLSFLIFNVVYWSIYFM.

Belongs to the ligand-gated ion channel (TC 1.A.9) family.

The protein localises to the postsynaptic cell membrane. It is found in the cell membrane. The chain is Ligand-gated ion channel 50 (lgc-50) from Caenorhabditis elegans.